The chain runs to 95 residues: Glycophorin-C (95 aa).

The Extracellular segment spans residues M1–E25. The helical; Signal-anchor for type III membrane protein transmembrane segment at I26 to L46 threads the bilayer. Topologically, residues M47–I95 are cytoplasmic. S71, S78, and S89 each carry phosphoserine.

Belongs to the glycophorin-C family.

Its subcellular location is the cell membrane. In Rattus norvegicus (Rat), this protein is Glycophorin-C (Gypc).